A 471-amino-acid polypeptide reads, in one-letter code: L-amino acid dehydrogenase (471 aa).

Glycine 31 is a Mg(2+) binding site. Residue serine 33 participates in FAD binding. Glycine 34 serves as a coordination point for Mg(2+). FAD is bound by residues glutamate 52, arginine 60, and valine 256. Alanine 283 lines the Mg(2+) pocket. Residue phenylalanine 453 coordinates FAD.

It belongs to the flavin monoamine oxidase family. FAD serves as cofactor. It depends on Mg(2+) as a cofactor.

The protein localises to the cellular thylakoid membrane. It catalyses the reaction a plastoquinone + an L-alpha-amino acid + H2O = a plastoquinol + a 2-oxocarboxylate + NH4(+). The catalysed reaction is a plastoquinone + L-arginine + H2O = a plastoquinol + 5-guanidino-2-oxopentanoate + NH4(+). It functions in the pathway amino-acid degradation; L-arginine degradation. Inhibited by Ca(2+) and other cations such as Ni(2+), Co(2+) and Zn(2+). The inhibition by o-phenanthroline and salicylhydroxamic acid suggests the presence of a metal cofactor besides FAD in the enzyme. The L-arginine-stimulated O(2) consumption involving slr0782 is inhibited by inhibitors of the respiratory electron transport chain, such as KCN and 2,5-dibromo-3-methyl-6-isopropyl-p-benzoquinone, which indicates a participation of the cytochrome b6/f complex and of a cytochrome oxidase. In terms of biological role, L-amino acid dehydrogenase with broad substrate specificity. Catalyzes the oxidative deamination of various L-amino acids, L-Arg and L-Cys being the best substrates in vitro. Likely functions mainly as an L-arginine dehydrogenase in vivo. Probably feeds electrons from L-arginine oxidation and also from the oxidation of other L-amino acids into the respiratory electron transport chain associated to the thylakoid membrane, and does not directly interact with molecular oxygen but donates electrons to the plastoquinone pool. Cannot use D-amino acids as substrates. In Synechocystis sp. (strain ATCC 27184 / PCC 6803 / Kazusa), this protein is L-amino acid dehydrogenase.